The primary structure comprises 361 residues: MSKRAFNFCAGPAALPDAVLQRAQAELLDWRGKGLSVMEMSHRSDDYVAIASKAEQDLRDLLDIPSDYKVLFLQGGASQQFAEIPLNLLPEDGVADYIDTGIWSKKAIEEARRYGTVNVAASAKEYDYFAIPGQNEWTLTKDAAYVHYASNETIGGLEFDWIPETGDVPLVTDMSSDILSRPLDVSRFGLIYAGAQKNIGPSGLVVVIVREDLLGRARSVCPTMLNYKTAADNGSMYNTPATYSWYLSGLVFEWLKEQGGVTAMEQRNRAKKDLLYKTIDASDFYTNPIQPSARSWMNVPFRLADERLDKPFLEGAEARGLLNLKGHRSVGGMRASIYNALGLDAVEALVAYMAEFEKEHG.

Position 43 (Arg-43) interacts with L-glutamate. Pyridoxal 5'-phosphate is bound by residues 77–78 (AS), Trp-103, Thr-153, Asp-173, and Gln-196. Lys-197 is modified (N6-(pyridoxal phosphate)lysine). Residue 238–239 (NT) coordinates pyridoxal 5'-phosphate.

Belongs to the class-V pyridoxal-phosphate-dependent aminotransferase family. SerC subfamily. Homodimer. It depends on pyridoxal 5'-phosphate as a cofactor.

Its subcellular location is the cytoplasm. It carries out the reaction O-phospho-L-serine + 2-oxoglutarate = 3-phosphooxypyruvate + L-glutamate. It catalyses the reaction 4-(phosphooxy)-L-threonine + 2-oxoglutarate = (R)-3-hydroxy-2-oxo-4-phosphooxybutanoate + L-glutamate. Its pathway is amino-acid biosynthesis; L-serine biosynthesis; L-serine from 3-phospho-D-glycerate: step 2/3. The protein operates within cofactor biosynthesis; pyridoxine 5'-phosphate biosynthesis; pyridoxine 5'-phosphate from D-erythrose 4-phosphate: step 3/5. Its function is as follows. Catalyzes the reversible conversion of 3-phosphohydroxypyruvate to phosphoserine and of 3-hydroxy-2-oxo-4-phosphonooxybutanoate to phosphohydroxythreonine. The protein is Phosphoserine aminotransferase of Pseudomonas aeruginosa (strain ATCC 15692 / DSM 22644 / CIP 104116 / JCM 14847 / LMG 12228 / 1C / PRS 101 / PAO1).